The primary structure comprises 115 residues: Large ribosomal subunit protein bL19 (115 aa).

This sequence belongs to the bacterial ribosomal protein bL19 family.

Its function is as follows. This protein is located at the 30S-50S ribosomal subunit interface and may play a role in the structure and function of the aminoacyl-tRNA binding site. This is Large ribosomal subunit protein bL19 from Coxiella burnetii (strain CbuK_Q154) (Coxiella burnetii (strain Q154)).